Here is a 445-residue protein sequence, read N- to C-terminus: MSAPAAPIPLESRASGPLSGTLRVPGDKSISHRALILGALSVGETRISGLLEGEDVLNTAQAMRALGAKVERHGDFAWTVHGVGVGGFAQPAATLDFGNSGTGCRLVMGAVAGCPITAVFDGDASLRSRPMRRILDPLELIGAKVTASAEGGKLPLTLQGASNPVPVVYRTPVASAQIKSAVLLAGLAAPGVTTVIEQEASRDHTELMLKHFGAEIVTTLEGTHGRRIALTGQPELHGAPVIVPADPSSAAFPLVAALIVDGSDLVLSDVMTNPLRTGLFATLREMGASIEEDDVRGDAGEPMVRLRVRASKLRGVEVPPERAPSMIDEYLVLAVAAAYAEGTTIMRGLHELRVKESDRLEATAAMLRVNGVKVEISDDDLIVEGRGHVPGGGLVATHMDHRIAMSALVMGLASDKPVKVDDTAFIATSFPDFVPLMCKAGADFA.

The 3-phosphoshikimate site is built by K28, S29, and R33. K28 is a binding site for phosphoenolpyruvate. Phosphoenolpyruvate contacts are provided by G101 and R129. Residues S175, Q177, D328, and K355 each coordinate 3-phosphoshikimate. Q177 lines the phosphoenolpyruvate pocket. D328 serves as the catalytic Proton acceptor. Phosphoenolpyruvate contacts are provided by R359 and R402.

This sequence belongs to the EPSP synthase family. In terms of assembly, monomer.

Its subcellular location is the cytoplasm. It catalyses the reaction 3-phosphoshikimate + phosphoenolpyruvate = 5-O-(1-carboxyvinyl)-3-phosphoshikimate + phosphate. The protein operates within metabolic intermediate biosynthesis; chorismate biosynthesis; chorismate from D-erythrose 4-phosphate and phosphoenolpyruvate: step 6/7. Catalyzes the transfer of the enolpyruvyl moiety of phosphoenolpyruvate (PEP) to the 5-hydroxyl of shikimate-3-phosphate (S3P) to produce enolpyruvyl shikimate-3-phosphate and inorganic phosphate. This Bradyrhizobium sp. (strain BTAi1 / ATCC BAA-1182) protein is 3-phosphoshikimate 1-carboxyvinyltransferase.